The primary structure comprises 266 residues: 3-methyl-2-oxobutanoate hydroxymethyltransferase (266 aa).

Mg(2+) is bound by residues D45 and D84. Residues 45–46 (DS), D84, and K112 each bind 3-methyl-2-oxobutanoate. Residue E114 coordinates Mg(2+). The active-site Proton acceptor is E181.

Belongs to the PanB family. As to quaternary structure, homodecamer; pentamer of dimers. It depends on Mg(2+) as a cofactor.

Its subcellular location is the cytoplasm. The catalysed reaction is 3-methyl-2-oxobutanoate + (6R)-5,10-methylene-5,6,7,8-tetrahydrofolate + H2O = 2-dehydropantoate + (6S)-5,6,7,8-tetrahydrofolate. The protein operates within cofactor biosynthesis; (R)-pantothenate biosynthesis; (R)-pantoate from 3-methyl-2-oxobutanoate: step 1/2. In terms of biological role, catalyzes the reversible reaction in which hydroxymethyl group from 5,10-methylenetetrahydrofolate is transferred onto alpha-ketoisovalerate to form ketopantoate. The chain is 3-methyl-2-oxobutanoate hydroxymethyltransferase from Pseudomonas syringae pv. tomato (strain ATCC BAA-871 / DC3000).